The primary structure comprises 29 residues: Cytochrome b6-f complex subunit 8 (29 aa).

The chain crosses the membrane as a helical span at residues 3–23; sequence ITSIAWGALMVVFTFSLSLVV.

Belongs to the PetN family. In terms of assembly, the 4 large subunits of the cytochrome b6-f complex are cytochrome b6, subunit IV (17 kDa polypeptide, PetD), cytochrome f and the Rieske protein, while the 4 small subunits are PetG, PetL, PetM and PetN. The complex functions as a dimer.

It localises to the plastid membrane. Functionally, component of the cytochrome b6-f complex, which mediates electron transfer between photosystem II (PSII) and photosystem I (PSI), cyclic electron flow around PSI, and state transitions. This chain is Cytochrome b6-f complex subunit 8, found in Aneura mirabilis (Parasitic liverwort).